Consider the following 360-residue polypeptide: MNPTDIADTTLDESIYSNYYLYESIPKPCTKEGIKAFGELFLPPLYSLVFVFGLLGNSVVVLVLFKYKRLRSMTDVYLLNLAISDLLFVFSLPFWGYYAADQWVFGLGLCKMISWMYLVGFYSGIFFVMLMSIDRYLAIVHAVFSLRARTLTYGVITSLATWSVAVFASLPGFLFSTCYTERNHTYCKTKYSLNSTTWKVLSSLEINILGLVIPLGIMLFCYSMIIRTLQHCKNEKKNKAVKMIFAVVVLFLGFWTPYNIVLFLETLVELEVLQDCTFERYLDYAIQATETLAFVHCCLNPIIYFFLGEKFRKYILQLFKTCRGLFVLCQYCGLLQIYSADTPSSSYTQSTMDHDLHDAL.

Over 1 to 39 the chain is Extracellular; sequence MNPTDIADTTLDESIYSNYYLYESIPKPCTKEGIKAFGE. The chain crosses the membrane as a helical span at residues 40–67; the sequence is LFLPPLYSLVFVFGLLGNSVVVLVLFKY. The Cytoplasmic portion of the chain corresponds to 68–77; the sequence is KRLRSMTDVY. The helical transmembrane segment at 78–98 threads the bilayer; sequence LLNLAISDLLFVFSLPFWGYY. The Extracellular portion of the chain corresponds to 99–111; that stretch reads AADQWVFGLGLCK. C110 and C187 form a disulfide bridge. A helical membrane pass occupies residues 112–133; sequence MISWMYLVGFYSGIFFVMLMSI. At 134-150 the chain is on the cytoplasmic side; it reads DRYLAIVHAVFSLRART. A helical transmembrane segment spans residues 151 to 175; the sequence is LTYGVITSLATWSVAVFASLPGFLF. Residues 176-206 are Extracellular-facing; sequence STCYTERNHTYCKTKYSLNSTTWKVLSSLEI. N183 and N194 each carry an N-linked (GlcNAc...) asparagine glycan. The chain crosses the membrane as a helical span at residues 207–226; the sequence is NILGLVIPLGIMLFCYSMII. Residues 227–242 lie on the Cytoplasmic side of the membrane; the sequence is RTLQHCKNEKKNKAVK. The helical transmembrane segment at 243–267 threads the bilayer; that stretch reads MIFAVVVLFLGFWTPYNIVLFLETL. Over 268 to 284 the chain is Extracellular; that stretch reads VELEVLQDCTFERYLDY. A helical transmembrane segment spans residues 285 to 308; it reads AIQATETLAFVHCCLNPIIYFFLG. Topologically, residues 309-360 are cytoplasmic; it reads EKFRKYILQLFKTCRGLFVLCQYCGLLQIYSADTPSSSYTQSTMDHDLHDAL.

This sequence belongs to the G-protein coupled receptor 1 family. In natural killer cells, CCL22 binding induces phosphorylation on yet undefined Ser/Thr residues, most probably by beta-adrenergic receptor kinases 1 and 2. In terms of tissue distribution, predominantly expressed in the thymus, in peripheral blood leukocytes, including T-cells, mostly CD4+ cells, and basophils, and in platelets; at lower levels, in the spleen and in monocytes. Detected also in macrophages, IL-2-activated natural killer cells and skin-homing memory T-cells, mostly the ones expressing the cutaneous lymphocyte antigen (CLA). Expressed in brain microvascular and coronary artery endothelial cells.

It is found in the cell membrane. Its function is as follows. High affinity receptor for the C-C type chemokines CCL17/TARC, CCL22/MDC and CKLF isoform 1/CKLF1. The activity of this receptor is mediated by G(i) proteins which activate a phosphatidylinositol-calcium second messenger system. Can function as a chemoattractant homing receptor on circulating memory lymphocytes and as a coreceptor for some primary HIV-2 isolates. In the CNS, could mediate hippocampal-neuron survival. This Homo sapiens (Human) protein is C-C chemokine receptor type 4 (CCR4).